Consider the following 375-residue polypeptide: Lipid droplet hydrolase 1 (375 aa).

The AB hydrolase-1 domain occupies 88–358 (VFVFVPGLAG…CSHNLCFDRP (271 aa)). Ser-177 serves as the catalytic Charge relay system. A Microbody targeting signal motif is present at residues 373–375 (SKL).

The protein belongs to the AB hydrolase superfamily. Lipase family.

It localises to the lipid droplet. The enzyme catalyses a triacylglycerol + H2O = a diacylglycerol + a fatty acid + H(+). Serine hydrolase required for the maintenance of steady state level of non-polar and polar lipids of lipid droplets and thus plays a role in maintaining the lipids homeostasis. Exhibits both esterase and triacylglycerol lipase activity. The polypeptide is Lipid droplet hydrolase 1 (Saccharomyces cerevisiae (strain ATCC 204508 / S288c) (Baker's yeast)).